The primary structure comprises 349 residues: Variable large protein 19 (349 aa).

The first 18 residues, 1 to 18, serve as a signal peptide directing secretion; that stretch reads MRKRISAIIMTLFMVLVS. The N-palmitoyl cysteine moiety is linked to residue C19. The S-diacylglycerol cysteine moiety is linked to residue C19.

The protein belongs to the variable large protein (Vlp) family. Gamma subfamily.

The protein resides in the cell outer membrane. The Vlp and Vsp proteins are antigenically distinct proteins, only one vlp or vsp gene is transcriptionally active at any one time. Switching between these genes is a mechanism of host immune response evasion. The chain is Variable large protein 19 from Borrelia hermsii.